The sequence spans 261 residues: tRNA pseudouridine synthase A (261 aa).

The active-site Nucleophile is the Asp-51. Tyr-109 is a binding site for substrate.

This sequence belongs to the tRNA pseudouridine synthase TruA family. Homodimer.

The catalysed reaction is uridine(38/39/40) in tRNA = pseudouridine(38/39/40) in tRNA. Functionally, formation of pseudouridine at positions 38, 39 and 40 in the anticodon stem and loop of transfer RNAs. The polypeptide is tRNA pseudouridine synthase A (Shewanella loihica (strain ATCC BAA-1088 / PV-4)).